A 298-amino-acid chain; its full sequence is Tyrosine recombinase XerC (298 aa).

Positions 1–85 constitute a Core-binding (CB) domain; it reads MKPIAAFQEY…SLRSFYRYLT (85 aa). The Tyr recombinase domain maps to 106-291; sequence HLPQFFYEAE…TMAHLKNEYM (186 aa). Catalysis depends on residues R146, K170, H243, R246, and H269. Y278 functions as the O-(3'-phospho-DNA)-tyrosine intermediate in the catalytic mechanism.

Belongs to the 'phage' integrase family. XerC subfamily. In terms of assembly, forms a cyclic heterotetrameric complex composed of two molecules of XerC and two molecules of XerD.

Its subcellular location is the cytoplasm. Its function is as follows. Site-specific tyrosine recombinase, which acts by catalyzing the cutting and rejoining of the recombining DNA molecules. The XerC-XerD complex is essential to convert dimers of the bacterial chromosome into monomers to permit their segregation at cell division. It also contributes to the segregational stability of plasmids. This is Tyrosine recombinase XerC from Lacticaseibacillus paracasei (strain ATCC 334 / BCRC 17002 / CCUG 31169 / CIP 107868 / KCTC 3260 / NRRL B-441) (Lactobacillus paracasei).